We begin with the raw amino-acid sequence, 146 residues long: UPF0178 protein BCQ_2874 (146 aa).

This sequence belongs to the UPF0178 family.

The sequence is that of UPF0178 protein BCQ_2874 from Bacillus cereus (strain Q1).